The primary structure comprises 230 residues: Ribonuclease 3 (230 aa).

Residues 1–134 (MKQLEELLST…FLGALLLDKG (134 aa)) form the RNase III domain. A Mg(2+)-binding site is contributed by Glu-47. Asp-51 is a catalytic residue. Mg(2+)-binding residues include Asp-120 and Glu-123. Residue Glu-123 is part of the active site. Residues 160-229 (DYKTCLQEFL…AKNALAQLSE (70 aa)) form the DRBM domain.

The protein belongs to the ribonuclease III family. As to quaternary structure, homodimer. The cofactor is Mg(2+).

The protein localises to the cytoplasm. It catalyses the reaction Endonucleolytic cleavage to 5'-phosphomonoester.. Its function is as follows. Digests double-stranded RNA. Involved in the processing of primary rRNA transcript to yield the immediate precursors to the large and small rRNAs (23S and 16S). Processes some mRNAs, and tRNAs when they are encoded in the rRNA operon. Processes pre-crRNA and tracrRNA of type II CRISPR loci if present in the organism. The chain is Ribonuclease 3 from Streptococcus pyogenes serotype M3 (strain SSI-1).